The following is a 159-amino-acid chain: Small ribosomal subunit protein uS7 (159 aa).

It belongs to the universal ribosomal protein uS7 family. In terms of assembly, part of the 30S ribosomal subunit. Contacts proteins S9 and S11.

Functionally, one of the primary rRNA binding proteins, it binds directly to 16S rRNA where it nucleates assembly of the head domain of the 30S subunit. Is located at the subunit interface close to the decoding center, probably blocks exit of the E-site tRNA. The protein is Small ribosomal subunit protein uS7 of Endomicrobium trichonymphae.